Reading from the N-terminus, the 566-residue chain is Unconventional myosin-VIIa (566 aa).

The region spanning 67-566 is the Myosin motor domain; sequence MMEDMIQHLG…AGVVYYESQG (500 aa). ATP is bound at residue 160-167; it reads GESGAGKT.

It belongs to the TRAFAC class myosin-kinesin ATPase superfamily. Myosin family. Might homodimerize in a two headed molecule through the formation of a coiled-coil rod. Identified in a complex with USH1C and USH1G. Interacts with MYRIP. Interacts with RPE65. Interacts with CIB2. May interact with CALM. Interacts with WHRN. Interacts with PLEKHB1 (via PH domain). Interacts with PCDH15. Interacts with TWF2. Interacts with USH1G. Interacts with MYH9. Interacts (via MyTH4-FERM domains) with cytoplasmic regions of ADGRV1 and USH2A. Interacts with PDZD7 (via MyTH4-FERM domains). Interacts with CALML4.

It is found in the cytoplasm. It localises to the cell cortex. Its subcellular location is the cytoskeleton. The protein localises to the synapse. Myosins are actin-based motor molecules with ATPase activity. Unconventional myosins serve in intracellular movements. Their highly divergent tails bind to membranous compartments, which are then moved relative to actin filaments. In the retina, plays an important role in the renewal of the outer photoreceptor disks. Plays an important role in the distribution and migration of retinal pigment epithelial (RPE) melanosomes and phagosomes, and in the regulation of opsin transport in retinal photoreceptors. In the inner ear, plays an important role in differentiation, morphogenesis and organization of cochlear hair cell bundles. Motor protein that is a part of the functional network formed by USH1C, USH1G, CDH23 and MYO7A that mediates mechanotransduction in cochlear hair cells. Required for normal hearing. Involved in hair-cell vesicle trafficking of aminoglycosides, which are known to induce ototoxicity. The sequence is that of Unconventional myosin-VIIa (MYO7A) from Sus scrofa (Pig).